The chain runs to 418 residues: 26S proteasome regulatory subunit 6B (418 aa).

M1 bears the N-acetylmethionine mark. The residue at position 21 (S21) is a Phosphoserine. T25 bears the Phosphothreonine mark. The residue at position 28 (S28) is a Phosphoserine. Residue G206–T213 participates in ATP binding. An N6-acetyllysine mark is found at K397 and K401.

Belongs to the AAA ATPase family. Component of the 19S proteasome regulatory particle complex. The 26S proteasome consists of a 20S core particle (CP) and two 19S regulatory subunits (RP). The regulatory particle is made of a lid composed of 9 subunits, a base containing 6 ATPases including PSMC4 and few additional components. Interacts with NR1I3. Interacts with PAAF1. Interacts with TRIM5. Interacts with ZFAND1.

The protein resides in the cytoplasm. It is found in the nucleus. Its function is as follows. Component of the 26S proteasome, a multiprotein complex involved in the ATP-dependent degradation of ubiquitinated proteins. This complex plays a key role in the maintenance of protein homeostasis by removing misfolded or damaged proteins, which could impair cellular functions, and by removing proteins whose functions are no longer required. Therefore, the proteasome participates in numerous cellular processes, including cell cycle progression, apoptosis, or DNA damage repair. PSMC4 belongs to the heterohexameric ring of AAA (ATPases associated with diverse cellular activities) proteins that unfolds ubiquitinated target proteins that are concurrently translocated into a proteolytic chamber and degraded into peptides. The sequence is that of 26S proteasome regulatory subunit 6B (PSMC4) from Bos taurus (Bovine).